The chain runs to 528 residues: Probable GTP-binding protein OBGM, mitochondrial (528 aa).

A mitochondrion-targeting transit peptide spans 1-45; it reads MWRRQHALLRRISLPKPPAATGIGCYYATEPEGRKPKTAPLQSRG. An Obg domain is found at 46–339; it reads MVDRFRLRAK…TYLILELKSI (294 aa). Disordered stretches follow at residues 52–87 and 167–212; these read LRAK…RGGD and HSPF…NHRG. Gly residues predominate over residues 77–86; the sequence is PDGGNGGRGG. Positions 197-207 are enriched in basic and acidic residues; it reads NTAENDCERGN. The OBG-type G domain maps to 340–513; it reads ADVGLVGMPN…LRVGLRDLMD (174 aa). GTP contacts are provided by residues 346–353 and 393–397; these read GMPNAGKS and DIPGL.

Belongs to the TRAFAC class OBG-HflX-like GTPase superfamily. OBG GTPase family.

Its subcellular location is the mitochondrion. Functionally, may bind GTP and have GTPase activity. In Oryza sativa subsp. japonica (Rice), this protein is Probable GTP-binding protein OBGM, mitochondrial (OBGM).